The primary structure comprises 155 residues: uncharacterized protein (155 aa).

The HTH asnC-type domain maps to 4–65 (IDEIDEVIVR…VVDPSFFGEF (62 aa)). A DNA-binding region (H-T-H motif) is located at residues 23 to 42 (LTELGRKVGLTASAVKNRIE).

This is an uncharacterized protein from Pyrococcus horikoshii (strain ATCC 700860 / DSM 12428 / JCM 9974 / NBRC 100139 / OT-3).